The following is a 780-amino-acid chain: Pendrin (780 aa).

At Met1 to Asp87 the chain is on the cytoplasmic side. A helical transmembrane segment spans residues Ile88–Leu108. Position 109 (Ala109) is a topological domain, extracellular. Residues Ala110–Phe130 traverse the membrane as a helical segment. Topologically, residues Gly131–His135 are cytoplasmic. A helical membrane pass occupies residues Ile136–Ala156. The Extracellular portion of the chain corresponds to Pro157–Thr191. A helical membrane pass occupies residues Leu192 to Val212. The Cytoplasmic portion of the chain corresponds to Arg213–Pro218. The helical transmembrane segment at Leu219–Val239 threads the bilayer. Residues Leu240–Asn263 lie on the Extracellular side of the membrane. A helical transmembrane segment spans residues Ile264–Ala284. Residues Val285–Lys295 are Cytoplasmic-facing. Residues Ile296–Gly316 traverse the membrane as a helical segment. Residues Ala317 to Gly344 lie on the Extracellular side of the membrane. A helical transmembrane segment spans residues Leu345–Val365. Residues Ser366 to Glu384 lie on the Cytoplasmic side of the membrane. The helical transmembrane segment at Phe385–Thr405 threads the bilayer. Over Ala406–Gln421 the chain is Extracellular. The helical transmembrane segment at Val422–Leu442 threads the bilayer. Residues Glu443 to Ser448 lie on the Cytoplasmic side of the membrane. The helical transmembrane segment at Val449–Pro469 threads the bilayer. The Extracellular portion of the chain corresponds to Arg470–Cys486. Residues Ile487–Leu507 form a helical membrane-spanning segment. Residues Thr508 to Ser780 lie on the Cytoplasmic side of the membrane. The STAS domain maps to His535 to Leu729.

It belongs to the SLC26A/SulP transporter (TC 2.A.53) family. Highly expressed in the kidney (at protein level).

It is found in the cell membrane. It localises to the apical cell membrane. It catalyses the reaction chloride(in) = chloride(out). The catalysed reaction is iodide(out) = iodide(in). It carries out the reaction hydrogencarbonate(in) + chloride(out) = hydrogencarbonate(out) + chloride(in). The enzyme catalyses iodide(in) + hydrogencarbonate(out) = iodide(out) + hydrogencarbonate(in). It catalyses the reaction iodide(in) + chloride(out) = iodide(out) + chloride(in). The catalysed reaction is formate(in) + chloride(out) = formate(out) + chloride(in). Functionally, sodium-independent transporter of chloride and iodide. Mediates electroneutral chloride-bicarbonate and chloride-formate exchange with 1:1 stoichiometry. Mediates electroneutral iodide-chloride and iodide-bicarbonate exchange. This is Pendrin (Slc26a4) from Rattus norvegicus (Rat).